The chain runs to 309 residues: Aspartate carbamoyltransferase catalytic subunit (309 aa).

Carbamoyl phosphate contacts are provided by arginine 49 and threonine 50. Lysine 77 contacts L-aspartate. Arginine 99, histidine 127, and glutamine 130 together coordinate carbamoyl phosphate. L-aspartate contacts are provided by arginine 160 and arginine 211. Carbamoyl phosphate-binding residues include alanine 252 and proline 253.

The protein belongs to the aspartate/ornithine carbamoyltransferase superfamily. ATCase family. In terms of assembly, heterododecamer (2C3:3R2) of six catalytic PyrB chains organized as two trimers (C3), and six regulatory PyrI chains organized as three dimers (R2).

It carries out the reaction carbamoyl phosphate + L-aspartate = N-carbamoyl-L-aspartate + phosphate + H(+). It participates in pyrimidine metabolism; UMP biosynthesis via de novo pathway; (S)-dihydroorotate from bicarbonate: step 2/3. Functionally, catalyzes the condensation of carbamoyl phosphate and aspartate to form carbamoyl aspartate and inorganic phosphate, the committed step in the de novo pyrimidine nucleotide biosynthesis pathway. The polypeptide is Aspartate carbamoyltransferase catalytic subunit (Geobacillus sp. (strain WCH70)).